The chain runs to 198 residues: Holliday junction branch migration complex subunit RuvA (198 aa).

Residues 1–63 (MYDYIKGQLT…EDAQLLFGFH (63 aa)) form a domain I region. The domain II stretch occupies residues 64-142 (SEEEKDVFLK…EAPKEESSKL (79 aa)). Residues 143 to 147 (PKAKH) form a flexible linker region. A domain III region spans residues 148–198 (QENEQLDEAIEALLALGYKATELKKIRAFFEGTSETAEQYIKSALKMLMKG).

The protein belongs to the RuvA family. As to quaternary structure, homotetramer. Forms an RuvA(8)-RuvB(12)-Holliday junction (HJ) complex. HJ DNA is sandwiched between 2 RuvA tetramers; dsDNA enters through RuvA and exits via RuvB. An RuvB hexamer assembles on each DNA strand where it exits the tetramer. Each RuvB hexamer is contacted by two RuvA subunits (via domain III) on 2 adjacent RuvB subunits; this complex drives branch migration. In the full resolvosome a probable DNA-RuvA(4)-RuvB(12)-RuvC(2) complex forms which resolves the HJ.

Its subcellular location is the cytoplasm. The RuvA-RuvB-RuvC complex processes Holliday junction (HJ) DNA during genetic recombination and DNA repair, while the RuvA-RuvB complex plays an important role in the rescue of blocked DNA replication forks via replication fork reversal (RFR). RuvA specifically binds to HJ cruciform DNA, conferring on it an open structure. The RuvB hexamer acts as an ATP-dependent pump, pulling dsDNA into and through the RuvAB complex. HJ branch migration allows RuvC to scan DNA until it finds its consensus sequence, where it cleaves and resolves the cruciform DNA. The sequence is that of Holliday junction branch migration complex subunit RuvA from Streptococcus equi subsp. zooepidemicus (strain MGCS10565).